The sequence spans 363 residues: Biotin synthase (363 aa).

The 229-residue stretch at 38 to 266 (NTVQVSTLLS…ETQVRLSAGR (229 aa)) folds into the Radical SAM core domain. Residues C53, C57, and C60 each contribute to the [4Fe-4S] cluster site. [2Fe-2S] cluster is bound by residues C97, C129, C189, and R261. Residues 315-363 (KAFEKKSQPESVAAEKSKYQSQGEKPRWSRPEHKIDRNLEAQQNAKTKA) are disordered. Basic and acidic residues predominate over residues 316-353 (AFEKKSQPESVAAEKSKYQSQGEKPRWSRPEHKIDRNL). The segment covering 354-363 (EAQQNAKTKA) has biased composition (polar residues).

This sequence belongs to the radical SAM superfamily. Biotin synthase family. In terms of assembly, homodimer. [4Fe-4S] cluster is required as a cofactor. The cofactor is [2Fe-2S] cluster.

The catalysed reaction is (4R,5S)-dethiobiotin + (sulfur carrier)-SH + 2 reduced [2Fe-2S]-[ferredoxin] + 2 S-adenosyl-L-methionine = (sulfur carrier)-H + biotin + 2 5'-deoxyadenosine + 2 L-methionine + 2 oxidized [2Fe-2S]-[ferredoxin]. The protein operates within cofactor biosynthesis; biotin biosynthesis; biotin from 7,8-diaminononanoate: step 2/2. Its function is as follows. Catalyzes the conversion of dethiobiotin (DTB) to biotin by the insertion of a sulfur atom into dethiobiotin via a radical-based mechanism. This chain is Biotin synthase, found in Christiangramia forsetii (strain DSM 17595 / CGMCC 1.15422 / KT0803) (Gramella forsetii).